The primary structure comprises 322 residues: UV DNA damage endonuclease (322 aa).

Belongs to the uve1/UvsE family.

Its function is as follows. Component in a DNA repair pathway. Removal of UV LIGHT damaged nucleotides. Recognizes pyrimidine dimers and cleave a phosphodiester bond immediately 5' to the lesion. This is UV DNA damage endonuclease from Halalkalibacterium halodurans (strain ATCC BAA-125 / DSM 18197 / FERM 7344 / JCM 9153 / C-125) (Bacillus halodurans).